The chain runs to 81 residues: Defensin-like protein 144 (81 aa).

Residues 1-24 form the signal peptide; the sequence is MKNSFRFSFTVITTFIICVLVSGA. Intrachain disulfides connect C30/C74, C42/C61, C47/C69, and C51/C71.

The protein belongs to the DEFL family.

The protein resides in the secreted. This chain is Defensin-like protein 144 (LCR10), found in Arabidopsis thaliana (Mouse-ear cress).